A 393-amino-acid chain; its full sequence is Xyloside xylosyltransferase 1 (393 aa).

Topologically, residues 1 to 23 (MGLLRGGLPCARAMARLGAVRSH) are cytoplasmic. The helical; Signal-anchor for type II membrane protein transmembrane segment at 24 to 44 (YCALLLAAALAVCAFYYLGSG) threads the bilayer. The Lumenal portion of the chain corresponds to 45–393 (RETFSSATKR…GNCNTPIPED (349 aa)). 104-106 (MFT) lines the UDP-alpha-D-xylose pocket. Mn(2+) is bound at residue D226. UDP-alpha-D-xylose is bound at residue L227. D228 contacts Mn(2+). The segment at 263-266 (HTFW) is interaction with target proteins. UDP-alpha-D-xylose is bound by residues S290, L328, and Q331. Q331 and W360 together coordinate a glycoprotein. Intrachain disulfides connect C350/C375 and C357/C386. H383 lines the Mn(2+) pocket. Residue N385 participates in a glycoprotein binding.

This sequence belongs to the glycosyltransferase 8 family. In terms of assembly, homodimer. Dimer formation may be essential for the retention in endoplasmic reticulum. The cofactor is Mg(2+). Mn(2+) is required as a cofactor.

Its subcellular location is the endoplasmic reticulum membrane. The catalysed reaction is 3-O-[alpha-D-xylosyl-(1-&gt;3)-beta-D-glucosyl]-L-seryl-[EGF-like domain protein] + UDP-alpha-D-xylose = 3-O-[alpha-D-xylosyl-(1-&gt;3)-alpha-D-xylosyl-(1-&gt;3)-beta-D-glucosyl]-L-seryl-[EGF-like domain protein] + UDP + H(+). Functionally, alpha-1,3-xylosyltransferase, which elongates the O-linked xylose-glucose disaccharide attached to EGF-like repeats in the extracellular domain of target proteins by catalyzing the addition of the second xylose. Known targets include Notch proteins and coagulation factors, such as F9. The polypeptide is Xyloside xylosyltransferase 1 (XXYLT1) (Homo sapiens (Human)).